Here is a 303-residue protein sequence, read N- to C-terminus: Lipoyl synthase (303 aa).

[4Fe-4S] cluster contacts are provided by Cys40, Cys45, Cys51, Cys67, Cys71, Cys74, and Ser280. The 217-residue stretch at 53 to 269 (AVRKTATFMI…KEIALSKGFS (217 aa)) folds into the Radical SAM core domain.

This sequence belongs to the radical SAM superfamily. Lipoyl synthase family. [4Fe-4S] cluster is required as a cofactor.

It localises to the cytoplasm. It carries out the reaction [[Fe-S] cluster scaffold protein carrying a second [4Fe-4S](2+) cluster] + N(6)-octanoyl-L-lysyl-[protein] + 2 oxidized [2Fe-2S]-[ferredoxin] + 2 S-adenosyl-L-methionine + 4 H(+) = [[Fe-S] cluster scaffold protein] + N(6)-[(R)-dihydrolipoyl]-L-lysyl-[protein] + 4 Fe(3+) + 2 hydrogen sulfide + 2 5'-deoxyadenosine + 2 L-methionine + 2 reduced [2Fe-2S]-[ferredoxin]. It participates in protein modification; protein lipoylation via endogenous pathway; protein N(6)-(lipoyl)lysine from octanoyl-[acyl-carrier-protein]. Catalyzes the radical-mediated insertion of two sulfur atoms into the C-6 and C-8 positions of the octanoyl moiety bound to the lipoyl domains of lipoate-dependent enzymes, thereby converting the octanoylated domains into lipoylated derivatives. This is Lipoyl synthase from Halalkalibacterium halodurans (strain ATCC BAA-125 / DSM 18197 / FERM 7344 / JCM 9153 / C-125) (Bacillus halodurans).